The chain runs to 112 residues: Nucleoid-associated protein FTH_1374 (112 aa).

A disordered region spans residues 1 to 27; it reads MNFDMSKLMQQAQKMQEQMKKAQQERE. Residues 17–27 show a composition bias toward basic and acidic residues; that stretch reads EQMKKAQQERE.

This sequence belongs to the YbaB/EbfC family. As to quaternary structure, homodimer.

The protein localises to the cytoplasm. Its subcellular location is the nucleoid. Functionally, binds to DNA and alters its conformation. May be involved in regulation of gene expression, nucleoid organization and DNA protection. The protein is Nucleoid-associated protein FTH_1374 of Francisella tularensis subsp. holarctica (strain OSU18).